Reading from the N-terminus, the 233-residue chain is V-type proton ATPase subunit E (233 aa).

The protein belongs to the V-ATPase E subunit family. In terms of assembly, V-ATPase is a heteromultimeric enzyme composed of a peripheral catalytic V1 complex (components A to H) attached to an integral membrane V0 proton pore complex (components: a, c, c', c'' and d).

Its function is as follows. Subunit of the peripheral V1 complex of vacuolar ATPase essential for assembly or catalytic function. V-ATPase is responsible for acidifying a variety of intracellular compartments in eukaryotic cells. This is V-type proton ATPase subunit E (vatE) from Dictyostelium discoideum (Social amoeba).